The chain runs to 88 residues: Acyl carrier protein (88 aa).

The Carrier domain occupies 4–79; it reads DSVPAKVMEI…AAVDYIQNKM (76 aa). S39 bears the O-(pantetheine 4'-phosphoryl)serine mark.

The protein belongs to the acyl carrier protein (ACP) family. 4'-phosphopantetheine is transferred from CoA to a specific serine of apo-ACP by AcpS. This modification is essential for activity because fatty acids are bound in thioester linkage to the sulfhydryl of the prosthetic group.

Its subcellular location is the cytoplasm. The protein operates within lipid metabolism; fatty acid biosynthesis. Its function is as follows. Carrier of the growing fatty acid chain in fatty acid biosynthesis. In Trichodesmium erythraeum (strain IMS101), this protein is Acyl carrier protein.